The following is a 711-amino-acid chain: Polyribonucleotide nucleotidyltransferase (711 aa).

Positions 486 and 492 each coordinate Mg(2+). A KH domain is found at 553–612; that stretch reads PRIHTIKINPDKIKDVIGKGGSVIRALTEETGTTIEIEDDGTVKIAATDGEKAKHAIRRI. An S1 motif domain is found at 622 to 690; sequence GRVYTGKVTR…RQGRIRLSIK (69 aa). The interval 689–711 is disordered; the sequence is IKEATEQSQPAAAPEAPAAEQGE. Residues 694-711 show a composition bias toward low complexity; the sequence is EQSQPAAAPEAPAAEQGE.

This sequence belongs to the polyribonucleotide nucleotidyltransferase family. In terms of assembly, component of the RNA degradosome, which is a multiprotein complex involved in RNA processing and mRNA degradation. It depends on Mg(2+) as a cofactor.

Its subcellular location is the cytoplasm. The enzyme catalyses RNA(n+1) + phosphate = RNA(n) + a ribonucleoside 5'-diphosphate. In terms of biological role, involved in mRNA degradation. Catalyzes the phosphorolysis of single-stranded polyribonucleotides processively in the 3'- to 5'-direction. In Shigella boydii serotype 4 (strain Sb227), this protein is Polyribonucleotide nucleotidyltransferase.